Here is a 136-residue protein sequence, read N- to C-terminus: Holo-[acyl-carrier-protein] synthase (136 aa).

Mg(2+) is bound by residues Asp8 and Glu57.

It belongs to the P-Pant transferase superfamily. AcpS family. Mg(2+) serves as cofactor.

Its subcellular location is the cytoplasm. The catalysed reaction is apo-[ACP] + CoA = holo-[ACP] + adenosine 3',5'-bisphosphate + H(+). Transfers the 4'-phosphopantetheine moiety from coenzyme A to a Ser of acyl-carrier-protein. This is Holo-[acyl-carrier-protein] synthase from Azorhizobium caulinodans (strain ATCC 43989 / DSM 5975 / JCM 20966 / LMG 6465 / NBRC 14845 / NCIMB 13405 / ORS 571).